The primary structure comprises 108 residues: Large ribosomal subunit protein uL24 (108 aa).

Belongs to the universal ribosomal protein uL24 family. In terms of assembly, part of the 50S ribosomal subunit.

Functionally, one of two assembly initiator proteins, it binds directly to the 5'-end of the 23S rRNA, where it nucleates assembly of the 50S subunit. In terms of biological role, one of the proteins that surrounds the polypeptide exit tunnel on the outside of the subunit. The protein is Large ribosomal subunit protein uL24 of Moorella thermoacetica (strain ATCC 39073 / JCM 9320).